We begin with the raw amino-acid sequence, 854 residues long: Protein SEY1 homolog (854 aa).

At 1-724 the chain is on the cytoplasmic side; that stretch reads MAAFSGETAV…LRNIESGKQS (724 aa). In terms of domain architecture, GB1/RHD3-type G spans 49-291; sequence GVNYHVVGVF…NSNFLFSNCS (243 aa). 59 to 66 serves as a coordination point for GTP; it reads GGQSSGKS. Residues 336-386 adopt a coiled-coil conformation; that stretch reads KHAAIEEFKEVCEEYTKKIQRGDVIPQFTRALEETIERLLKNFSDQTKLYK. Residues 725-745 traverse the membrane as a helical segment; the sequence is LPPWVLPVMLLLGWNELYYLL. The Lumenal segment spans residues 746-748; the sequence is TSP. Residues 749–769 traverse the membrane as a helical segment; that stretch reads ILLIAIIVIAVLFFKTFLKSQ. Residues 770–854 lie on the Cytoplasmic side of the membrane; it reads LEVLEEKCPV…CRESRDKGED (85 aa). A disordered region spans residues 808 to 854; that stretch reads GGGGAQFRDPTQATSVSGASAGVSSESSSAASPRRRVCRESRDKGED. A compositionally biased stretch (low complexity) spans 822-839; that stretch reads SVSGASAGVSSESSSAAS. Positions 845–854 are enriched in basic and acidic residues; it reads CRESRDKGED.

Belongs to the TRAFAC class dynamin-like GTPase superfamily. GB1/RHD3 GTPase family. RHD3 subfamily.

The protein localises to the endoplasmic reticulum membrane. Its function is as follows. Probable GTP-binding protein that may be involved in cell development. The chain is Protein SEY1 homolog from Trypanosoma brucei brucei (strain 927/4 GUTat10.1).